Reading from the N-terminus, the 166-residue chain is Phospholipase A2 inhibitor CgMIP-II (166 aa).

The first 19 residues, 1–19 (MRLILLSGLLLLGTFLANG), serve as a signal peptide directing secretion. The C-type lectin domain occupies 46–161 (LRYALMTVHN…CDDNLLVVCE (116 aa)). Intrachain disulfides connect cysteine 83–cysteine 160 and cysteine 138–cysteine 152. Asparagine 122 carries an N-linked (GlcNAc...) asparagine glycan.

This sequence belongs to the alpha-type phospholipase A2 inhibitor family. In terms of assembly, homomer composed of 20-25-kDa subunits that form oligomers of 180 kDa. N-glycosylated. The glycosidic chain may contain superficial sialic acid residues. In terms of tissue distribution, expressed by the liver.

Its subcellular location is the secreted. Functionally, selectively inhibits the toxic properties of myotoxin-II from the same venom (AC P81165). Does not inhibit PLA2, anti-coagulant and lethal activities of the basic myotoxin I from the same venom (AC P0DQP6), nor the different crotoxin forms (heterodimer or subunit B alone). Does not block the enzymatic activity of crude acidic PLA2 fractions from the same venom. The protein is Phospholipase A2 inhibitor CgMIP-II of Cerrophidion godmani (Porthidium godmani).